The chain runs to 278 residues: Aquaporin NIP3-3 (278 aa).

The next 2 membrane-spanning stretches (helical) occupy residues 70–90 (VSAEFFGTFILIFTVLSTIIM) and 99–119 (TLLGIATSAGLAVTVLVLSLI). Positions 127–129 (NPA) match the NPA 1 motif. The next 3 membrane-spanning stretches (helical) occupy residues 141 to 163 (PSAHLLPYISSQILGAVAASFAV), 185 to 205 (AFFVEFIITFFLLFIITALAT), and 213 to 233 (LIAVAVGATVMMNILVAGPST). The short motif at 238 to 240 (NPA) is the NPA 2 element. A helical transmembrane segment spans residues 255–275 (IWVYLVATPLGAIAGTGAYVA).

This sequence belongs to the MIP/aquaporin (TC 1.A.8) family. NIP (TC 1.A.8.12) subfamily. As to expression, expressed in leaves and at lower levels in roots and anthers.

The protein localises to the membrane. Its function is as follows. Aquaporins facilitate the transport of water and small neutral solutes across cell membranes. The polypeptide is Aquaporin NIP3-3 (NIP3-3) (Oryza sativa subsp. japonica (Rice)).